Here is a 156-residue protein sequence, read N- to C-terminus: Small ribosomal subunit protein uS7c (156 aa).

It belongs to the universal ribosomal protein uS7 family. As to quaternary structure, part of the 30S ribosomal subunit.

The protein resides in the plastid. It localises to the chloroplast. One of the primary rRNA binding proteins, it binds directly to 16S rRNA where it nucleates assembly of the head domain of the 30S subunit. The chain is Small ribosomal subunit protein uS7c (rps7) from Rhodomonas salina (Cryptomonas salina).